The following is a 472-amino-acid chain: Aspartyl/glutamyl-tRNA(Asn/Gln) amidotransferase subunit B (472 aa).

The protein belongs to the GatB/GatE family. GatB subfamily. Heterotrimer of A, B and C subunits.

The catalysed reaction is L-glutamyl-tRNA(Gln) + L-glutamine + ATP + H2O = L-glutaminyl-tRNA(Gln) + L-glutamate + ADP + phosphate + H(+). It catalyses the reaction L-aspartyl-tRNA(Asn) + L-glutamine + ATP + H2O = L-asparaginyl-tRNA(Asn) + L-glutamate + ADP + phosphate + 2 H(+). Functionally, allows the formation of correctly charged Asn-tRNA(Asn) or Gln-tRNA(Gln) through the transamidation of misacylated Asp-tRNA(Asn) or Glu-tRNA(Gln) in organisms which lack either or both of asparaginyl-tRNA or glutaminyl-tRNA synthetases. The reaction takes place in the presence of glutamine and ATP through an activated phospho-Asp-tRNA(Asn) or phospho-Glu-tRNA(Gln). The protein is Aspartyl/glutamyl-tRNA(Asn/Gln) amidotransferase subunit B of Campylobacter jejuni subsp. jejuni serotype O:6 (strain 81116 / NCTC 11828).